A 166-amino-acid polypeptide reads, in one-letter code: Interferon gamma (166 aa).

The first 23 residues, 1 to 23 (MKYTSSFLALLLCVLLGFSGSYG), serve as a signal peptide directing secretion. Glutamine 24 carries the pyrrolidone carboxylic acid modification. 2 N-linked (GlcNAc...) asparagine glycosylation sites follow: asparagine 39 and asparagine 106.

It belongs to the type II (or gamma) interferon family. Homodimer. Interacts with IFNGR1 (via extracellular domain); this interaction promotes IFNGR1 dimerization. Released primarily from activated T lymphocytes.

The protein localises to the secreted. Type II interferon produced by immune cells such as T-cells and NK cells that plays crucial roles in antimicrobial, antiviral, and antitumor responses by activating effector immune cells and enhancing antigen presentation. Primarily signals through the JAK-STAT pathway after interaction with its receptor IFNGR1 to affect gene regulation. Upon IFNG binding, IFNGR1 intracellular domain opens out to allow association of downstream signaling components JAK2, JAK1 and STAT1, leading to STAT1 activation, nuclear translocation and transcription of IFNG-regulated genes. Many of the induced genes are transcription factors such as IRF1 that are able to further drive regulation of a next wave of transcription. Plays a role in class I antigen presentation pathway by inducing a replacement of catalytic proteasome subunits with immunoproteasome subunits. In turn, increases the quantity, quality, and repertoire of peptides for class I MHC loading. Increases the efficiency of peptide generation also by inducing the expression of activator PA28 that associates with the proteasome and alters its proteolytic cleavage preference. Up-regulates as well MHC II complexes on the cell surface by promoting expression of several key molecules such as cathepsins B/CTSB, H/CTSH, and L/CTSL. Participates in the regulation of hematopoietic stem cells during development and under homeostatic conditions by affecting their development, quiescence, and differentiation. This chain is Interferon gamma (IFNG), found in Ovis aries (Sheep).